Consider the following 361-residue polypeptide: Ribosomal RNA large subunit methyltransferase M (361 aa).

S-adenosyl-L-methionine is bound by residues Ser187, 220-223 (CPGG), Asp239, Asp259, and Asp276. The active-site Proton acceptor is the Lys305.

Belongs to the class I-like SAM-binding methyltransferase superfamily. RNA methyltransferase RlmE family. RlmM subfamily. Monomer.

It is found in the cytoplasm. The enzyme catalyses cytidine(2498) in 23S rRNA + S-adenosyl-L-methionine = 2'-O-methylcytidine(2498) in 23S rRNA + S-adenosyl-L-homocysteine + H(+). Catalyzes the 2'-O-methylation at nucleotide C2498 in 23S rRNA. The sequence is that of Ribosomal RNA large subunit methyltransferase M from Shewanella oneidensis (strain ATCC 700550 / JCM 31522 / CIP 106686 / LMG 19005 / NCIMB 14063 / MR-1).